A 276-amino-acid chain; its full sequence is Undecaprenyl-diphosphatase (276 aa).

The next 6 helical transmembrane spans lie at 43–63 (RAMAFNIIIQLAAILAVVWEF), 85–105 (ANLLLAFMPAVVLGVLFADLI), 109–129 (LFNPITVATALVIGGVIMLWA), 183–203 (AATEFSFFLAMPTMVGAAVYS), 214–234 (SDLPVFAIGFVTSFIFAMIAV), and 249–269 (FAWYRIAFGLLILATWQFGWV).

This sequence belongs to the UppP family.

It is found in the cell inner membrane. It catalyses the reaction di-trans,octa-cis-undecaprenyl diphosphate + H2O = di-trans,octa-cis-undecaprenyl phosphate + phosphate + H(+). Catalyzes the dephosphorylation of undecaprenyl diphosphate (UPP). Confers resistance to bacitracin. This chain is Undecaprenyl-diphosphatase, found in Pseudomonas putida (strain W619).